We begin with the raw amino-acid sequence, 67 residues long: UPF0519 protein C (67 aa).

A disordered region spans residues 18–37 (KSQANLNSNSTNSPNNVQGL). A compositionally biased stretch (low complexity) spans 22–33 (NLNSNSTNSPNN).

Belongs to the UPF0519 family.

This is UPF0519 protein C from Dictyostelium discoideum (Social amoeba).